The chain runs to 461 residues: Protein naked cuticle homolog 2 (461 aa).

The disordered stretch occupies residues 1 to 106 (MGKFQSKHAA…DGEKAASREG (106 aa)). G2 carries the N-myristoyl glycine lipid modification. Basic and acidic residues-rich tracts occupy residues 34–73 (RGAE…DKGS) and 97–106 (DGEKAASREG). Residues 121–186 (QCDVSVEEDN…LRVKLTVSPE (66 aa)) are interaction with DVL1, DVL2 and DVL3. The 36-residue stretch at 127-162 (EEDNRQEWTFTLYDFDNSGKVTREDMSSLMHTIYEV) folds into the EF-hand domain. Ca(2+)-binding residues include D140, D142, S144, K146, and D151. Disordered stretches follow at residues 176-205 (TLRV…PTRG), 263-302 (YTSK…HAIH), 321-359 (TRAL…PGKA), 372-414 (SAQD…GQPT), and 441-461 (HEHH…FHPS). Residues 188-205 (SSKKECPLTGQDREPTRG) are compositionally biased toward basic and acidic residues. The segment at 307 to 396 (QVLAEHVIPA…PPQPYGHKRY (90 aa)) is interaction with TGFA. Residues 341–350 (PKGPGKPLGT) are compositionally biased toward low complexity. Residues 380 to 390 (PQPPPQPPPQP) show a composition bias toward pro residues.

The protein belongs to the NKD family. Interacts with RNF25, TGFA (via cytoplasmic domain), and PPP2R3A. Interacts with DVL1, DVL2 and DVL3. In terms of processing, ubiquitinated, leading to rapid proteasomal degradation. Interaction with TGFA interferes with RNF25 binding and protects against ubiquitination mediated by RNF25. In terms of tissue distribution, expressed in the cecum, colon, esophagus, ileum, jejunum, skin and stomach.

It is found in the cell membrane. Its subcellular location is the cytoplasm. The protein localises to the cytoplasmic vesicle. Functionally, cell autonomous antagonist of the canonical Wnt signaling pathway. May activate a second Wnt signaling pathway that controls planar cell polarity. Required for processing of TGFA and for targeting of TGFA to the basolateral membrane of polarized epithelial cells. This Mus musculus (Mouse) protein is Protein naked cuticle homolog 2 (Nkd2).